A 393-amino-acid chain; its full sequence is Lipid-A-disaccharide synthase (393 aa).

It belongs to the LpxB family.

It carries out the reaction a lipid X + a UDP-2-N,3-O-bis[(3R)-3-hydroxyacyl]-alpha-D-glucosamine = a lipid A disaccharide + UDP + H(+). Its pathway is bacterial outer membrane biogenesis; LPS lipid A biosynthesis. Condensation of UDP-2,3-diacylglucosamine and 2,3-diacylglucosamine-1-phosphate to form lipid A disaccharide, a precursor of lipid A, a phosphorylated glycolipid that anchors the lipopolysaccharide to the outer membrane of the cell. The protein is Lipid-A-disaccharide synthase of Rhodopseudomonas palustris (strain HaA2).